Here is a 1407-residue protein sequence, read N- to C-terminus: DNA-directed RNA polymerase subunit beta' (1407 aa).

The Zn(2+) site is built by Cys70, Cys72, Cys85, and Cys88. The Mg(2+) site is built by Asp460, Asp462, and Asp464. Residues Cys814, Cys888, Cys895, and Cys898 each coordinate Zn(2+).

The protein belongs to the RNA polymerase beta' chain family. The RNAP catalytic core consists of 2 alpha, 1 beta, 1 beta' and 1 omega subunit. When a sigma factor is associated with the core the holoenzyme is formed, which can initiate transcription. Requires Mg(2+) as cofactor. It depends on Zn(2+) as a cofactor.

It catalyses the reaction RNA(n) + a ribonucleoside 5'-triphosphate = RNA(n+1) + diphosphate. Its function is as follows. DNA-dependent RNA polymerase catalyzes the transcription of DNA into RNA using the four ribonucleoside triphosphates as substrates. The sequence is that of DNA-directed RNA polymerase subunit beta' from Salmonella paratyphi B (strain ATCC BAA-1250 / SPB7).